A 432-amino-acid chain; its full sequence is MSDIACIEAREIIDSRGNPTVEVDVSLSDGSFGRACVPSGASTGEFEALEMRDGDKERYNGKGVLKAVGTVNTLIADTLEGMDALNQGEIDHAMRNLDGTDNKSKLGANAMLGVSMACARAAADFLGVPLYRYLGGVHTFRMPVPMANIINGGKHSDNKIDFQEFMVMPIGAASMREAVRMTAEVFHALKGLLAADGKATSVGDEGGFAPDLDNEQALEYIMKAIAKAGLAPRKDVCIALDCASSELFDEGDRRGYKFWKSNPGKLFTAQEMIDLYKKWIATYPIVSIEDPLDQNDWAGYVQLTKELGDKVQIVGDDFFVTNTGRLARGIKEGSCNSILIKLNQIGTVTETVDAVRMAQNAGYAAVISHRSGETEDAFIADLAVALETGQIKTGSMSRSDRVAKYNQLMRIEEELGAQARYYGAKTFERFGC.

Residue Gln163 coordinates (2R)-2-phosphoglycerate. The active-site Proton donor is Glu205. Positions 241, 289, and 316 each coordinate Mg(2+). Residues Lys341, Arg370, Ser371, and Lys392 each contribute to the (2R)-2-phosphoglycerate site. Residue Lys341 is the Proton acceptor of the active site.

This sequence belongs to the enolase family. Mg(2+) is required as a cofactor.

It is found in the cytoplasm. The protein localises to the secreted. Its subcellular location is the cell surface. The catalysed reaction is (2R)-2-phosphoglycerate = phosphoenolpyruvate + H2O. The protein operates within carbohydrate degradation; glycolysis; pyruvate from D-glyceraldehyde 3-phosphate: step 4/5. In terms of biological role, catalyzes the reversible conversion of 2-phosphoglycerate (2-PG) into phosphoenolpyruvate (PEP). It is essential for the degradation of carbohydrates via glycolysis. In Treponema pallidum (strain Nichols), this protein is Enolase.